An 893-amino-acid polypeptide reads, in one-letter code: Translation initiation factor IF-2 (893 aa).

Disordered regions lie at residues 51-203 (KEHG…AEAE) and 216-300 (EENE…SMQH). 3 stretches are compositionally biased toward basic and acidic residues: residues 102-203 (ALEE…AEAE), 216-238 (EENE…DADY), and 245-261 (HARE…EQQP). Residues 392-561 (GRAPVVTIMG…LLQSEVLELT (170 aa)) enclose the tr-type G domain. Residues 401–408 (GHVDHGKT) form a G1 region. GTP is bound at residue 401–408 (GHVDHGKT). A G2 region spans residues 426 to 430 (GITQH). The segment at 447-450 (DTPG) is G3. Residues 447-451 (DTPGH) and 501-504 (NKID) contribute to the GTP site. Residues 501–504 (NKID) are G4. The interval 537 to 539 (SAK) is G5.

This sequence belongs to the TRAFAC class translation factor GTPase superfamily. Classic translation factor GTPase family. IF-2 subfamily.

The protein localises to the cytoplasm. Functionally, one of the essential components for the initiation of protein synthesis. Protects formylmethionyl-tRNA from spontaneous hydrolysis and promotes its binding to the 30S ribosomal subunits. Also involved in the hydrolysis of GTP during the formation of the 70S ribosomal complex. This is Translation initiation factor IF-2 from Aliivibrio fischeri (strain MJ11) (Vibrio fischeri).